A 212-amino-acid polypeptide reads, in one-letter code: Methylthioribulose-1-phosphate dehydratase (212 aa).

The Zn(2+) site is built by histidine 97 and histidine 99.

The protein belongs to the aldolase class II family. MtnB subfamily. Homotetramer. The cofactor is Zn(2+).

It carries out the reaction 5-(methylsulfanyl)-D-ribulose 1-phosphate = 5-methylsulfanyl-2,3-dioxopentyl phosphate + H2O. It functions in the pathway amino-acid biosynthesis; L-methionine biosynthesis via salvage pathway; L-methionine from S-methyl-5-thio-alpha-D-ribose 1-phosphate: step 2/6. Functionally, catalyzes the dehydration of methylthioribulose-1-phosphate (MTRu-1-P) into 2,3-diketo-5-methylthiopentyl-1-phosphate (DK-MTP-1-P). In Bacillus cereus (strain ZK / E33L), this protein is Methylthioribulose-1-phosphate dehydratase.